A 400-amino-acid chain; its full sequence is LIM/homeobox protein Lhx3 (400 aa).

2 LIM zinc-binding domains span residues 34-84 and 93-147; these read CAGC…CKDD and CAAC…CKAD. Phosphoserine is present on Ser-74. Positions 160–219 form a DNA-binding region, homeobox; that stretch reads AKRPRTTITAKQLETLKSAYNTSPKPARHVREQLSSETGLDMRVVQVWFQNRRAKEKRLK. 2 disordered regions span residues 215 to 280 and 297 to 400; these read EKRL…SSLG and TLDH…HAQF. Tyr-230 carries the phosphotyrosine modification. 2 positions are modified to phosphoserine: Ser-237 and Ser-241. 2 stretches are compositionally biased toward pro residues: residues 319-334 and 352-361; these read GIPP…PGPQ and SGPPGGPPPM. Residues 368 to 380 show a composition bias toward polar residues; that stretch reads GPSSDLSTESSSG.

In terms of assembly, interacts with POU1F1. At neuronal promoters, interacts with LDB1, in motor neurons LDB1 is displaced by ISL1 and a ternary complex is formed in which ISL1 contacts both LHX3 and LDB1; allosteric structural changes in the DNA binding domain of LHX3, induced by the ISL1-LHX3 interaction, may explain differences in sequence specificity of the different complexes. Interacts with LDB2. May interact with CITED2/MRG1. As to expression, mostly expressed in the pituitary anterior and intermediate lobes. It is also expressed in the pineal gland and transiently in the primordia of motor neurons including the spinal cord, pons and medulla oblongata.

It is found in the nucleus. Its function is as follows. Transcription factor. Recognizes and binds to the consensus sequence motif 5'-AATTAATTA-3' in the regulatory elements of target genes, such as glycoprotein hormones alpha chain CGA and visual system homeobox CHX10, positively modulating transcription; transcription can be co-activated by LDB2. Synergistically enhances transcription from the prolactin promoter in cooperation with POU1F1/Pit-1. Required for the establishment of the specialized cells of the pituitary gland and the nervous system. Involved in the development of interneurons and motor neurons in cooperation with LDB1 and ISL1. This chain is LIM/homeobox protein Lhx3 (Lhx3), found in Mus musculus (Mouse).